The sequence spans 361 residues: 3-dehydroquinate synthase (361 aa).

This sequence belongs to the archaeal-type DHQ synthase family.

It carries out the reaction 2-amino-2,3,7-trideoxy-D-lyxo-hept-6-ulosonate + NAD(+) + H2O = 3-dehydroquinate + NH4(+) + NADH + H(+). Functionally, catalyzes the oxidative deamination and cyclization of 2-amino-3,7-dideoxy-D-threo-hept-6-ulosonic acid (ADH) to yield 3-dehydroquinate (DHQ), which is fed into the canonical shikimic pathway of aromatic amino acid biosynthesis. The sequence is that of 3-dehydroquinate synthase from Methanococcus maripaludis (strain C5 / ATCC BAA-1333).